The sequence spans 427 residues: Retron Mx65 reverse transcriptase (427 aa).

Residues 136–366 (RHYSIHRPRE…GAQRVTGVTV (231 aa)) enclose the Reverse transcriptase domain. Positions 219, 315, and 316 each coordinate Mg(2+).

This sequence belongs to the bacterial reverse transcriptase family.

The enzyme catalyses DNA(n) + a 2'-deoxyribonucleoside 5'-triphosphate = DNA(n+1) + diphosphate. Functionally, reverse transcriptase (RT) responsible for synthesis of msDNA-Mx65 (a branched molecule with RNA linked by a 2',5'-phosphodiester bond to ssDNA). The retron transcript serves as primer (from a conserved internal G residue) and template for the reaction, and codes for the RT. The retron is involved in antiviral defense. In Myxococcus xanthus, this protein is Retron Mx65 reverse transcriptase.